The chain runs to 210 residues: Probable glutathione S-transferase gst-36 (210 aa).

The GST N-terminal domain maps to 2 to 79 (PHFKFYYFDV…YLGHQFHRAG (78 aa)). Residues tyrosine 8, tryptophan 39, lysine 43, 49 to 51 (GQV), and 63 to 64 (QT) each bind glutathione. In terms of domain architecture, GST C-terminal spans 81-210 (NAVDCARLDM…YVSQRKATPA (130 aa)).

It belongs to the GST superfamily. Sigma family.

It catalyses the reaction RX + glutathione = an S-substituted glutathione + a halide anion + H(+). Conjugation of reduced glutathione to a wide number of exogenous and endogenous hydrophobic electrophiles. The chain is Probable glutathione S-transferase gst-36 (gst-36) from Caenorhabditis elegans.